A 163-amino-acid polypeptide reads, in one-letter code: Pheromone-binding protein (163 aa).

An N-terminal signal peptide occupies residues 1–21; sequence MLRKISLLLLPVFVAINLVHS. Disulfide bonds link Cys-40-Cys-75, Cys-71-Cys-129, and Cys-118-Cys-138.

It belongs to the PBP/GOBP family. Homodimer. In terms of tissue distribution, antenna.

Functionally, this major soluble protein in olfactory sensilla of male moths might serve to solubilize the extremely hydrophobic pheromone molecules and to transport pheromone through the aqueous lymph to receptors located on olfactory cilia. The sequence is that of Pheromone-binding protein from Antheraea polyphemus (Polyphemus moth).